We begin with the raw amino-acid sequence, 590 residues long: Leucine-rich repeat transmembrane neuronal protein 4 (590 aa).

A signal peptide spans 1 to 30; that stretch reads MGFRLITQLKGMSVLLVLFPTLLLVMLTGA. In terms of domain architecture, LRRNT spans 31–59; that stretch reads QRACPKNCRCDGKIVYCESHAFADIPENI. Over 31 to 424 the chain is Extracellular; sequence QRACPKNCRC…HEYEHVSFHK (394 aa). Residue Asn-58 is glycosylated (N-linked (GlcNAc...) asparagine). LRR repeat units follow at residues 60–83, 84–107, 108–131, 132–155, 157–179, 180–203, 205–227, 228–251, 252–275, and 276–299; these read SGGS…QFAG, LNQL…AFQG, IRRL…TFHP, VPNL…QFKG, RKLI…VFQD, CRNL…AFAG, LKLK…HFPR, LFNL…LTWT, WSSL…TFKC, and LPNL…TVNA. An N-linked (GlcNAc...) asparagine glycan is attached at Asn-126. Residue Asn-291 is glycosylated (N-linked (GlcNAc...) asparagine). Residues 311–362 form the LRRCT domain; it reads NMWECSRSICPLFYWLKNFKGNKESTMICAGPKHIQGEKVSDAVETYNICSD. A helical transmembrane segment spans residues 425-445; it reads IIAGSVALFLSVAMILLVIYV. Residues 446–590 are Cytoplasmic-facing; it reads SWKRYPASMK…PAIYLERITN (145 aa).

Belongs to the LRRTM family. Peripherally associated with AMPAR complex. AMPAR complex consists of an inner core made of 4 pore-forming GluA/GRIA proteins (GRIA1, GRIA2, GRIA3 and GRIA4) and 4 major auxiliary subunits arranged in a twofold symmetry. One of the two pairs of distinct binding sites is occupied either by CNIH2, CNIH3 or CACNG2, CACNG3. The other harbors CACNG2, CACNG3, CACNG4, CACNG8 or GSG1L. This inner core of AMPAR complex is complemented by outer core constituents binding directly to the GluA/GRIA proteins at sites distinct from the interaction sites of the inner core constituents. Outer core constituents include at least PRRT1, PRRT2, CKAMP44/SHISA9, FRRS1L and NRN1. The proteins of the inner and outer core serve as a platform for other, more peripherally associated AMPAR constituents, including LRRTM4. Alone or in combination, these auxiliary subunits control the gating and pharmacology of the AMPAR complex and profoundly impact their biogenesis and protein processing. Expressed in the brain (at protein level).

The protein resides in the cell membrane. It is found in the postsynaptic cell membrane. Functionally, may play a role in the development and maintenance of the nervous system. Exhibits strong synaptogenic activity, restricted to excitatory presynaptic differentiation. This is Leucine-rich repeat transmembrane neuronal protein 4 (Lrrtm4) from Rattus norvegicus (Rat).